The primary structure comprises 1199 residues: DNA-directed RNA polymerase subunit beta' (1199 aa).

Zn(2+) is bound by residues Cys60, Cys62, Cys75, and Cys78. Residues Asp449, Asp451, and Asp453 each coordinate Mg(2+). The Zn(2+) site is built by Cys818, Cys892, Cys899, and Cys902.

It belongs to the RNA polymerase beta' chain family. In terms of assembly, the RNAP catalytic core consists of 2 alpha, 1 beta, 1 beta' and 1 omega subunit. When a sigma factor is associated with the core the holoenzyme is formed, which can initiate transcription. Mg(2+) serves as cofactor. The cofactor is Zn(2+).

The enzyme catalyses RNA(n) + a ribonucleoside 5'-triphosphate = RNA(n+1) + diphosphate. Functionally, DNA-dependent RNA polymerase catalyzes the transcription of DNA into RNA using the four ribonucleoside triphosphates as substrates. The sequence is that of DNA-directed RNA polymerase subunit beta' from Bacillus velezensis (strain DSM 23117 / BGSC 10A6 / LMG 26770 / FZB42) (Bacillus amyloliquefaciens subsp. plantarum).